The primary structure comprises 614 residues: MSHILSAVAWPYTNGPRHIGHVAGFGVPSDVFSRYMRMAGHDVLMVSGTDEHGTPILVLAEQEGVTPQELTDRYNRVIVDDLANLGLSYDLFTRTTTRNHYAVVQEMFRTVHKNGYMVEQTTMGAISPSTGRTLPDRYIEGTCPICGYDGARGDQCDNCGNQLDAVDLINPRSRINGEKPTFIETQHFFLDLPALADALGAWLRTRTHWRPNVLNFSLNLLDDLRPRAMTRDIDWGIPVPLPGWEDNPAKRLYVWFDAVIGYLSASIEWARRQELAAGGAGTPDAEAWRAWWNPTPGLDQQSYYFMGKDNITFHSQIWPAELLGYAGKGSRGGEPGIYGELNLPTEVVSSEFLTTEGKQFSTSRGVVVYVRDMLARYQPDALRYFIAVAGPESSDSDFTWSEFKRRTNDELVAGWGNLVNRTATMVHKNFGAVPEPGERLAVDEAVLATTRAGFAQVGRLLETQRQRAAVTEAMRVVGEVNKYVSETEPWKLKTDRDRLATVLHTATQAVADCNVLLAPFLPHAAQEIHSALGGTGTLAPQPRVDEVTDLDDASRSYPIITGDYVRGETLAPWESAAVVAGTPIEKPSPVFTKLDDAIVEEELERMRAGAAERA.

The 'HIGH' region signature appears at 11-21 (PYTNGPRHIGH). Residues Cys-143, Cys-146, Cys-156, and Cys-159 each coordinate Zn(2+). Residues 359–363 (QFSTS) carry the 'KMSKS' region motif. Thr-362 is a binding site for ATP.

The protein belongs to the class-I aminoacyl-tRNA synthetase family. MetG type 1 subfamily. As to quaternary structure, monomer. Zn(2+) is required as a cofactor.

It is found in the cytoplasm. The enzyme catalyses tRNA(Met) + L-methionine + ATP = L-methionyl-tRNA(Met) + AMP + diphosphate. Is required not only for elongation of protein synthesis but also for the initiation of all mRNA translation through initiator tRNA(fMet) aminoacylation. The chain is Methionine--tRNA ligase from Beutenbergia cavernae (strain ATCC BAA-8 / DSM 12333 / CCUG 43141 / JCM 11478 / NBRC 16432 / NCIMB 13614 / HKI 0122).